The chain runs to 579 residues: Chromosomal replication initiator protein DnaA (579 aa).

The tract at residues 1 to 71 (MQDFWQAAAA…TALACEYWET (71 aa)) is domain I, interacts with DnaA modulators. Positions 71 to 242 (TQVSVHFVLD…QQSDTVHERS (172 aa)) are domain II. Disordered stretches follow at residues 131–196 (AGAQ…SAAH) and 212–240 (EASARSYRVPSPQPAAPAGAQQQSDTVHE). Low complexity predominate over residues 171-183 (SQSQQSAQGRGAA). A domain III, AAA+ region region spans residues 243–459 (RLNPILTFDN…GALRKILAFS (217 aa)). ATP is bound by residues G287, G289, K290, and T291. The domain IV, binds dsDNA stretch occupies residues 460 to 579 (NFHGKDITID…LHVLEQTLKG (120 aa)).

Belongs to the DnaA family. In terms of assembly, oligomerizes as a right-handed, spiral filament on DNA at oriC.

It is found in the cytoplasm. In terms of biological role, plays an essential role in the initiation and regulation of chromosomal replication. ATP-DnaA binds to the origin of replication (oriC) to initiate formation of the DNA replication initiation complex once per cell cycle. Binds the DnaA box (a 9 base pair repeat at the origin) and separates the double-stranded (ds)DNA. Forms a right-handed helical filament on oriC DNA; dsDNA binds to the exterior of the filament while single-stranded (ss)DNA is stabiized in the filament's interior. The ATP-DnaA-oriC complex binds and stabilizes one strand of the AT-rich DNA unwinding element (DUE), permitting loading of DNA polymerase. After initiation quickly degrades to an ADP-DnaA complex that is not apt for DNA replication. Binds acidic phospholipids. This Cupriavidus metallidurans (strain ATCC 43123 / DSM 2839 / NBRC 102507 / CH34) (Ralstonia metallidurans) protein is Chromosomal replication initiator protein DnaA.